The chain runs to 144 residues: Interleukin-9 (144 aa).

Positions 1-18 are cleaved as a signal peptide; it reads MLLAMVLTSALLLCSVAG. A Pyrrolidone carboxylic acid modification is found at Q19. N-linked (GlcNAc...) asparagine glycans are attached at residues N50, N63, N78, and N114.

The protein belongs to the IL-7/IL-9 family. Interacts with IL9R. Interacts with IL2RG.

The protein localises to the secreted. Its function is as follows. Multifunctional cytokine secreted mainly by T-helper 2 lymphocytes and also mast cells or NKT cells that plays important roles in the immune response against parasites. Affects intestinal epithelial permeability and adaptive immunity. In addition, induces the differentiation of specific T-cell subsets such as IL-17 producing helper T-cells (TH17) and also proliferation and differentiation of mast cells. Mechanistically, exerts its biological effects through a receptor composed of IL9R subunit and a signal transducing subunit IL2RG. Receptor stimulation results in the rapid activation of JAK1 and JAK3 kinase activities leading to STAT1, STAT3 and STAT5-mediated transcriptional programs. Induction of differentiation genes seems to be mediated by STAT1 alone, while protection of cells from apoptosis depends on STAT3 and STAT5. This Homo sapiens (Human) protein is Interleukin-9 (IL9).